The primary structure comprises 904 residues: Exo-beta-D-glucosaminidase (904 aa).

An N-terminal signal peptide occupies residues Met-1–Ala-32. Positions Ala-28–Gly-49 are disordered. The active-site Proton donor is the Asp-476. The Nucleophile role is filled by Glu-545. Residues Ser-813–Val-828 show a composition bias toward low complexity. A disordered region spans residues Ser-813–Ser-833.

The protein belongs to the glycosyl hydrolase 2 family. Monomer.

The protein localises to the secreted. The enzyme catalyses Hydrolysis of chitosan or chitosan oligosaccharides to remove successive D-glucosamine residues from the non-reducing termini.. Functionally, hydrolyzes chitosan and chitooligosaccharides with retention of anomeric configuration. Has no beta-mannosidase activity. The polypeptide is Exo-beta-D-glucosaminidase (Streptomyces avermitilis (strain ATCC 31267 / DSM 46492 / JCM 5070 / NBRC 14893 / NCIMB 12804 / NRRL 8165 / MA-4680)).